The sequence spans 198 residues: Na(+)-translocating NADH-quinone reductase subunit E (198 aa).

6 consecutive transmembrane segments (helical) span residues 11–31 (AVFVENMALAFFLGMCTFLAV), 35–55 (VSTAFGLGIAVTLVLGISVPV), 77–97 (FLNFITFIGVIAALVQILEMI), 110–130 (GIFLPLITVNCAIFGGVSFMV), 140–160 (VVYGFGSGTGWMLAIVAMAGI), and 176–196 (LGITFITTGLMALGFMSFSGV).

This sequence belongs to the NqrDE/RnfAE family. As to quaternary structure, composed of six subunits; NqrA, NqrB, NqrC, NqrD, NqrE and NqrF.

The protein resides in the cell inner membrane. It carries out the reaction a ubiquinone + n Na(+)(in) + NADH + H(+) = a ubiquinol + n Na(+)(out) + NAD(+). Its function is as follows. NQR complex catalyzes the reduction of ubiquinone-1 to ubiquinol by two successive reactions, coupled with the transport of Na(+) ions from the cytoplasm to the periplasm. NqrA to NqrE are probably involved in the second step, the conversion of ubisemiquinone to ubiquinol. The polypeptide is Na(+)-translocating NADH-quinone reductase subunit E (Serratia proteamaculans (strain 568)).